A 197-amino-acid polypeptide reads, in one-letter code: uncharacterized protein (197 aa).

The 138-residue stretch at Asp-29 to Asp-166 folds into the PfpI endopeptidase domain. Cys-98 functions as the Nucleophile in the catalytic mechanism.

The protein belongs to the peptidase C56 family.

This is an uncharacterized protein from Bacillus subtilis (strain 168).